We begin with the raw amino-acid sequence, 425 residues long: Cysteate synthase (425 aa).

Residue Lys106 is modified to N6-(pyridoxal phosphate)lysine. Pyridoxal 5'-phosphate-binding residues include Asn132 and Thr382.

Belongs to the threonine synthase family. Cysteate synthase subfamily. Homotrimer. Requires pyridoxal 5'-phosphate as cofactor.

The catalysed reaction is O-phospho-L-serine + sulfite + H(+) = L-cysteate + phosphate. The protein operates within cofactor biosynthesis; coenzyme M biosynthesis. Its function is as follows. Specifically catalyzes the beta-elimination of phosphate from L-phosphoserine and the beta-addition of sulfite to the dehydroalanine intermediate to produce L-cysteate. The protein is Cysteate synthase of Methanosphaerula palustris (strain ATCC BAA-1556 / DSM 19958 / E1-9c).